The sequence spans 103 residues: 4-amino-4-deoxychorismate mutase (103 aa).

Residues methionine 1–methionine 92 enclose the Chorismate mutase domain.

The enzyme catalyses 4-amino-4-deoxychorismate = 4-amino-4-deoxyprephenate. Its pathway is antibiotic biosynthesis. Involved in chloramphenicol biosynthesis. Probably catalyzes the conversion of 4-amino-4-deoxychorismate to 4-amino-4-deoxyprephenate. The polypeptide is 4-amino-4-deoxychorismate mutase (Streptomyces venezuelae (strain ATCC 10712 / CBS 650.69 / DSM 40230 / JCM 4526 / NBRC 13096 / PD 04745)).